The primary structure comprises 582 residues: MGGLQKKKYERGSATNYITRNKARKKLQLSLADFRRLCILKGIYPHEPKHKKKVNKGSTAPRTFYLLKDIRFLLHEPIVRKFREYKVFVRKLRKAYGKAEWTGVERLRDNKPGYKLDHIIKERYPTFIDALRDIDDALSMCFLFSTFARTGKCHVQTITLCRRLTVEWMNYVVTSRSLRKVFLSIKGIYYQAEVLGQLITWLVPYQFAHDHPTDVDYRVMATFTEMYTTLFGFINFRLYQTLNLVYPPKLDSKAESELKAEHEEDYAMDSESYLEKLSALSASLARVVATVEEEENQLDNFPTEEEDQENMQAREKEQKEQEAQKRLFEGLKFFLNREVPRESLAFILRCFGAEVSWDKSLCIGGTYEVTDETITHQIVDRPDMDKQYINRYYIQPQWVFDSVNAKMRLPVEDYFLGTMLPPHLSPFVEEKDGDYVPPEKLKLMALQRGEKPVQEEDEEEEDEDEEEDDDVDDEEFTEEKNLKKMEDTRAQGKTLSVKVTPGKVKPWETGSVGNKVRLEQEEKAEEKRLAIMMMKKKEKYLYDKIMFGKKRTTREVNKLTAKRKAHEDASKAQKKQKKAKKQ.

Residues 277 to 329 (LSALSASLARVVATVEEEENQLDNFPTEEEDQENMQAREKEQKEQEAQKRLFE) are a coiled coil. Over residues 294–309 (EENQLDNFPTEEEDQE) the composition is skewed to acidic residues. The tract at residues 294 to 317 (EENQLDNFPTEEEDQENMQAREKE) is disordered. The BRCT domain occupies 323-416 (AQKRLFEGLK…MRLPVEDYFL (94 aa)). Residues 445-454 (ALQRGEKPVQ) are compositionally biased toward basic and acidic residues. Disordered regions lie at residues 445–511 (ALQR…ETGS) and 554–582 (REVN…AKKQ). Residues 455–477 (EEDEEEEDEDEEEDDDVDDEEFT) show a composition bias toward acidic residues. The segment covering 478 to 490 (EEKNLKKMEDTRA) has biased composition (basic and acidic residues). The stretch at 517 to 582 (RLEQEEKAEE…QKKQKKAKKQ (66 aa)) forms a coiled coil. Residues 572-582 (AQKKQKKAKKQ) show a composition bias toward basic residues.

The protein belongs to the pescadillo family. As to quaternary structure, component of the PeBoW complex, composed of bop1, pes1 and wdr12. The complex is held together by bop1, which interacts with pes1 via its N-terminal domain and with wdr12 via a high-affinity interaction between the seven-bladed beta-propeller domains of the 2 proteins. The PeBoW complex associates with the 66S pre-ribosome.

The protein resides in the nucleus. It is found in the nucleolus. It localises to the nucleoplasm. In terms of biological role, component of the PeBoW complex, which is required for maturation of 28S and 5.8S ribosomal RNAs and formation of the 60S ribosome. In Salmo salar (Atlantic salmon), this protein is Pescadillo homolog (pes1).